Reading from the N-terminus, the 684-residue chain is MMLRFRSFSTTTHLLRGQNLTEKIVQKYAVGLQPSSKKVYSGDYVTIKPAHCMSHDNSWPVATKFMNLGASKVKDNRQIVCTLDHDVQNKSEQNLTKYTNIEKFAKSQGIDFYPAGRGIGHQIMIEEGYAFPLNLTVASDSHSNTYGGIGALGTPIVRTDAASIWATGQTWWQIPPVAKVELIGQLPKGVTGKDIIVALCGIFNNDEVLNHAIEFVGDDAISKLPIDYRLTIANMTTEWGALSGLFPVDETLVEFYQNRLKKLNKPDHPRINNQTIDQLINNKLTSDNDAVYAKHLQIDLSSLSPYISGPNSVKISNSLYDLSQQNIAINKAYLVSCTNSRLSDIQAAADIIKGHKVNPNVEFYVAAASSLVQKDAEQSGAWQTILDAGAKPLPAGCGPCIGLGTGLLKDGEVGISATNRNFKGRMGSKDALAYLASPEVVAASAVLGKIGGPEELNGEPVKQAPRIIKSIETESNSANEAESTSEEASGSIDILPGFPQSIEGELILCNADNINTDGIYPGKYTYQDDITKEQMAKVCMENYDSQFYSKTKPGDIIISGYNFGTGSSREQAATCILARGMKLIVAGSFGNIFSRNSINNALLTLEIPDLINKLRQQYEGNDELTIRTGWFLKWDVTKAQVTVVDGDDNLILTQKVGELGTNLQDIIVKGGLEGWVKSELKTNQ.

3 residues coordinate [4Fe-4S] cluster: Cys337, Cys397, and Cys400.

Belongs to the aconitase/IPM isomerase family. The cofactor is [4Fe-4S] cluster.

The protein resides in the mitochondrion. The enzyme catalyses (2R,3S)-homoisocitrate = cis-homoaconitate + H2O. Its pathway is amino-acid biosynthesis; L-lysine biosynthesis via AAA pathway; L-alpha-aminoadipate from 2-oxoglutarate: step 3/5. Its function is as follows. Catalyzes the reversible hydration of cis-homoaconitate to (2R,3S)-homoisocitrate, a step in the alpha-aminoadipate pathway for lysine biosynthesis. The protein is Homoaconitase, mitochondrial (LYS4) of Candida albicans (strain SC5314 / ATCC MYA-2876) (Yeast).